The primary structure comprises 604 residues: Elongation factor 4 (604 aa).

The tr-type G domain maps to lysine 8 to asparagine 190. Residues aspartate 20 to threonine 25 and asparagine 137 to aspartate 140 each bind GTP.

This sequence belongs to the TRAFAC class translation factor GTPase superfamily. Classic translation factor GTPase family. LepA subfamily.

Its subcellular location is the cell inner membrane. The enzyme catalyses GTP + H2O = GDP + phosphate + H(+). Required for accurate and efficient protein synthesis under certain stress conditions. May act as a fidelity factor of the translation reaction, by catalyzing a one-codon backward translocation of tRNAs on improperly translocated ribosomes. Back-translocation proceeds from a post-translocation (POST) complex to a pre-translocation (PRE) complex, thus giving elongation factor G a second chance to translocate the tRNAs correctly. Binds to ribosomes in a GTP-dependent manner. In Fusobacterium nucleatum subsp. nucleatum (strain ATCC 25586 / DSM 15643 / BCRC 10681 / CIP 101130 / JCM 8532 / KCTC 2640 / LMG 13131 / VPI 4355), this protein is Elongation factor 4.